The primary structure comprises 275 residues: Thioredoxin-like 1-1, chloroplastic (275 aa).

A chloroplast-targeting transit peptide spans Met-1 to Arg-72. Residues Ser-73–Pro-206 form the Thioredoxin domain. Active-site nucleophile residues include Cys-129 and Cys-132. An intrachain disulfide couples Cys-129 to Cys-132. The tract at residues Lys-238 to Arg-275 is disordered. Over residues Pro-249–Ser-264 the composition is skewed to low complexity.

It belongs to the thioredoxin family.

It is found in the plastid. The protein localises to the chloroplast. Functionally, thiol-disulfide oxidoreductase that may participate in various redox reactions. Possesses insulin disulfide bonds reducing activity. The protein is Thioredoxin-like 1-1, chloroplastic of Arabidopsis thaliana (Mouse-ear cress).